The chain runs to 251 residues: Hydroxyacylglutathione hydrolase (251 aa).

The Zn(2+) site is built by histidine 53, histidine 55, aspartate 57, histidine 58, histidine 110, aspartate 127, and histidine 165.

The protein belongs to the metallo-beta-lactamase superfamily. Glyoxalase II family. In terms of assembly, monomer. Zn(2+) serves as cofactor.

The enzyme catalyses an S-(2-hydroxyacyl)glutathione + H2O = a 2-hydroxy carboxylate + glutathione + H(+). It functions in the pathway secondary metabolite metabolism; methylglyoxal degradation; (R)-lactate from methylglyoxal: step 2/2. Its function is as follows. Thiolesterase that catalyzes the hydrolysis of S-D-lactoyl-glutathione to form glutathione and D-lactic acid. This is Hydroxyacylglutathione hydrolase from Klebsiella pneumoniae subsp. pneumoniae (strain ATCC 700721 / MGH 78578).